A 202-amino-acid chain; its full sequence is Pectinesterase inhibitor 11 (202 aa).

The signal sequence occupies residues 1–21 (MAKQIFYTLFLFLLSTAILTA). Cysteines 43 and 52 form a disulfide. Asparagine 76 carries an N-linked (GlcNAc...) asparagine glycan. A disulfide bridge links cysteine 109 with cysteine 160.

Belongs to the PMEI family.

Its subcellular location is the secreted. It localises to the extracellular space. It is found in the apoplast. Its function is as follows. Pectin methylesterase (PME) inhibitor involved in the maintenance of cell wall integrity in response to necrotrophic pathogens. Modulates PME activity and pectin methylesterification during infection by Botrytis cinerea and contributes to resistance against the pathogen. This chain is Pectinesterase inhibitor 11, found in Arabidopsis thaliana (Mouse-ear cress).